Consider the following 297-residue polypeptide: Phosphatidylserine decarboxylase proenzyme (297 aa).

Catalysis depends on charge relay system; for autoendoproteolytic cleavage activity residues Asp-92, His-149, and Ser-254. Residue Ser-254 is the Schiff-base intermediate with substrate; via pyruvic acid; for decarboxylase activity of the active site. Position 254 is a pyruvic acid (Ser); by autocatalysis (Ser-254).

It belongs to the phosphatidylserine decarboxylase family. PSD-B subfamily. Prokaryotic type I sub-subfamily. As to quaternary structure, heterodimer of a large membrane-associated beta subunit and a small pyruvoyl-containing alpha subunit. Requires pyruvate as cofactor. In terms of processing, is synthesized initially as an inactive proenzyme. Formation of the active enzyme involves a self-maturation process in which the active site pyruvoyl group is generated from an internal serine residue via an autocatalytic post-translational modification. Two non-identical subunits are generated from the proenzyme in this reaction, and the pyruvate is formed at the N-terminus of the alpha chain, which is derived from the carboxyl end of the proenzyme. The autoendoproteolytic cleavage occurs by a canonical serine protease mechanism, in which the side chain hydroxyl group of the serine supplies its oxygen atom to form the C-terminus of the beta chain, while the remainder of the serine residue undergoes an oxidative deamination to produce ammonia and the pyruvoyl prosthetic group on the alpha chain. During this reaction, the Ser that is part of the protease active site of the proenzyme becomes the pyruvoyl prosthetic group, which constitutes an essential element of the active site of the mature decarboxylase.

The protein localises to the cell membrane. The enzyme catalyses a 1,2-diacyl-sn-glycero-3-phospho-L-serine + H(+) = a 1,2-diacyl-sn-glycero-3-phosphoethanolamine + CO2. It functions in the pathway phospholipid metabolism; phosphatidylethanolamine biosynthesis; phosphatidylethanolamine from CDP-diacylglycerol: step 2/2. Its function is as follows. Catalyzes the formation of phosphatidylethanolamine (PtdEtn) from phosphatidylserine (PtdSer). The sequence is that of Phosphatidylserine decarboxylase proenzyme from Bordetella bronchiseptica (strain ATCC BAA-588 / NCTC 13252 / RB50) (Alcaligenes bronchisepticus).